Here is a 122-residue protein sequence, read N- to C-terminus: Large ribosomal subunit protein uL18 (122 aa).

It belongs to the universal ribosomal protein uL18 family. In terms of assembly, part of the 50S ribosomal subunit; part of the 5S rRNA/L5/L18/L25 subcomplex. Contacts the 5S and 23S rRNAs.

Functionally, this is one of the proteins that bind and probably mediate the attachment of the 5S RNA into the large ribosomal subunit, where it forms part of the central protuberance. The polypeptide is Large ribosomal subunit protein uL18 (Prochlorococcus marinus (strain MIT 9215)).